We begin with the raw amino-acid sequence, 502 residues long: Probable cytosol aminopeptidase (502 aa).

Residues Lys-269 and Asp-274 each coordinate Mn(2+). Lys-281 is a catalytic residue. 3 residues coordinate Mn(2+): Asp-292, Asp-351, and Glu-353. The active site involves Arg-355.

This sequence belongs to the peptidase M17 family. Mn(2+) is required as a cofactor.

It is found in the cytoplasm. It carries out the reaction Release of an N-terminal amino acid, Xaa-|-Yaa-, in which Xaa is preferably Leu, but may be other amino acids including Pro although not Arg or Lys, and Yaa may be Pro. Amino acid amides and methyl esters are also readily hydrolyzed, but rates on arylamides are exceedingly low.. The catalysed reaction is Release of an N-terminal amino acid, preferentially leucine, but not glutamic or aspartic acids.. Functionally, presumably involved in the processing and regular turnover of intracellular proteins. Catalyzes the removal of unsubstituted N-terminal amino acids from various peptides. The protein is Probable cytosol aminopeptidase of Vibrio parahaemolyticus serotype O3:K6 (strain RIMD 2210633).